We begin with the raw amino-acid sequence, 201 residues long: MARYTGPVTRKSRRLGTDLVGGDQSFEKRPYPPGQHGRARIKDSEYRQQLQEKQKARFTYGVMEKQFRRYYEEAVRHSGKTGEELLKILESRLDNVVYRAGLARTRRMARQLVSHGHFSVNGVHVNVPSYRVSQYDIIDVRDNSLNTVPFQIARETAGDRPIPSWLQVVGGRQRILIHQLPERAQIEVPLTEQLIVEYYSK.

The segment at 1-42 (MARYTGPVTRKSRRLGTDLVGGDQSFEKRPYPPGQHGRARIK) is disordered. Positions 91–157 (SRLDNVVYRA…VPFQIARETA (67 aa)) constitute an S4 RNA-binding domain.

Belongs to the universal ribosomal protein uS4 family. As to quaternary structure, part of the 30S ribosomal subunit. Contacts protein S5. The interaction surface between S4 and S5 is involved in control of translational fidelity.

Its function is as follows. One of the primary rRNA binding proteins, it binds directly to 16S rRNA where it nucleates assembly of the body of the 30S subunit. Functionally, with S5 and S12 plays an important role in translational accuracy. This Mycobacterium ulcerans (strain Agy99) protein is Small ribosomal subunit protein uS4.